The sequence spans 449 residues: POU domain, class 3, transcription factor 1 (449 aa).

Disordered regions lie at residues 1–22 (MATT…TGPL), 76–108 (GGGG…GGGG), 132–152 (AHHL…HQPQ), 184–251 (GLHH…PSSD), and 393–449 (KRMT…GSVQ). 2 stretches are compositionally biased toward gly residues: residues 11–20 (GPGGGAGGTG) and 93–108 (AGGG…GGGG). The segment covering 132 to 143 (AHHLGPAMSPSP) has biased composition (low complexity). Residues 188–197 (ALHEDGHEAQ) show a composition bias toward basic and acidic residues. Residues 218–230 (AGGLHAAAAHLHP) show a composition bias toward low complexity. Residues 245–319 (EDAPSSDDLE…LLNKWLEETD (75 aa)) form the POU-specific domain. Residues 337-396 (KRKKRTSIEVGVKGALESHFLKCPKPSAHEITGLADSLQLEKEVVRVWFCNRRQKEKRMT) constitute a DNA-binding region (homeobox). The span at 425–434 (PSAPPPPPPA) shows a compositional bias: pro residues.

The protein belongs to the POU transcription factor family. Class-3 subfamily.

It is found in the nucleus. Its function is as follows. Transcription factor that binds to the octamer motif (5'-ATTTGCAT-3'). Acts as a transcriptional activator when binding cooperatively with SOX4, SOX11, or SOX12 to gene promoters. Acts as a transcriptional repressor of myelin-specific genes. The protein is POU domain, class 3, transcription factor 1 (Pou3f1) of Mus musculus (Mouse).